The sequence spans 647 residues: XK-related protein 4 (647 aa).

Over residues 1 to 15 (MAAKSDGRLKMKKSS) the composition is skewed to basic and acidic residues. Residues 1–44 (MAAKSDGRLKMKKSSDVAFTPLQNSDNSGSVQGLAPGLPSGSGA) form a disordered region. The segment covering 21 to 31 (PLQNSDNSGSV) has biased composition (polar residues). The next 2 helical transmembrane spans lie at 112–132 (WILA…WLAV) and 142–162 (WFGL…VFSF). Residue Ser-197 is modified to Phosphoserine. Residues 197–238 (SAAGEGEVRPSTPQRQASNASKSNIAATNSGSNSNGATRTSG) are disordered. The segment covering 207 to 236 (STPQRQASNASKSNIAATNSGSNSNGATRT) has biased composition (polar residues). The next 8 membrane-spanning stretches (helical) occupy residues 245–265 (CSFC…GQIW), 303–323 (HLLA…CIIV), 328–348 (LQAL…WALA), 362–382 (KPIS…TIAA), 393–415 (VFQL…WIVH), 425–445 (WEEI…WFNV), 454–474 (LFIY…LWYL), and 484–504 (FAIP…VFML).

The protein belongs to the XK family. In terms of assembly, homodimer; homodimerization takes place upon caspase cleavage. Interacts with the processed C-terminus of XRCC4 (protein XRCC4, C-terminus); interaction promotes the phospholipid scramblase activity. Undergoes proteolytic processing by caspase-3 (CASP3), caspase-6 (CASP6) and caspase-7 (CASP7) to generate the XK-related protein 4, processed form, leading to its activation. In terms of tissue distribution, highly expressed in expressed in the brain; weakly expressed in the spleen, thymus, uterus, blood vessels and fetus.

It localises to the cell membrane. It catalyses the reaction a 1,2-diacyl-sn-glycero-3-phospho-L-serine(in) = a 1,2-diacyl-sn-glycero-3-phospho-L-serine(out). Its activity is regulated as follows. Phospholipid scramblase activity is activated upon caspase cleavage to generate the XK-related protein 4, processed form. Does not act prior the onset of apoptosis. With respect to regulation, homodimerizes upon caspase cleavage. Phospholipid scramblase activity is activated following interaction with the processed C-terminus of XRCC4 (protein XRCC4, C-terminus). Its function is as follows. Phospholipid scramblase that promotes phosphatidylserine exposure on apoptotic cell surface. Phosphatidylserine is a specific marker only present at the surface of apoptotic cells and acts as a specific signal for engulfment. The protein is XK-related protein 4 of Mus musculus (Mouse).